Consider the following 349-residue polypeptide: Quinone oxidoreductase-like protein 2 (349 aa).

An N6-acetyllysine modification is found at K35. N6-succinyllysine is present on K200.

The protein belongs to the zinc-containing alcohol dehydrogenase family. Quinone oxidoreductase subfamily.

This chain is Quinone oxidoreductase-like protein 2, found in Bos taurus (Bovine).